We begin with the raw amino-acid sequence, 124 residues long: Ribonuclease pancreatic (124 aa).

Residues Lys-7 and Arg-10 each contribute to the substrate site. The Proton acceptor role is filled by His-12. Intrachain disulfides connect Cys-26–Cys-84, Cys-40–Cys-95, Cys-58–Cys-110, and Cys-65–Cys-72. An N-linked (GlcNAc...) asparagine glycan is attached at Asn-34. Substrate is bound by residues 41 to 45 (KPVNT), Lys-66, and Arg-85. The active-site Proton donor is His-119.

It belongs to the pancreatic ribonuclease family. As to quaternary structure, monomer. Interacts with and forms tight 1:1 complexes with RNH1. Dimerization of two such complexes may occur. Interaction with RNH1 inhibits this protein. Pancreas.

Its subcellular location is the secreted. The catalysed reaction is an [RNA] containing cytidine + H2O = an [RNA]-3'-cytidine-3'-phosphate + a 5'-hydroxy-ribonucleotide-3'-[RNA].. The enzyme catalyses an [RNA] containing uridine + H2O = an [RNA]-3'-uridine-3'-phosphate + a 5'-hydroxy-ribonucleotide-3'-[RNA].. In terms of biological role, endonuclease that catalyzes the cleavage of RNA on the 3' side of pyrimidine nucleotides. Acts on single-stranded and double-stranded RNA. The protein is Ribonuclease pancreatic (RNASE1) of Mesocricetus auratus (Golden hamster).